Reading from the N-terminus, the 187-residue chain is MDKYSINQFKNGLKLMLDSNPCSILNNEIVKPGKGQAFNRVKFKDLITGKTLIKTFKSGEFLEGADVMELDLQYLYNDGNAWNFMDPHSFEQYIIDGITVSSVKGYLVEQDICIVTLWNDNPISITPPNHVILEVFDTDPGLKGDTIGASGKPATMNTGVVLQVPLFVSIGDKVKVDTRINEYAGRA.

An N6-(3,6-diaminohexanoyl)-5-hydroxylysine modification is found at lysine 34.

This sequence belongs to the elongation factor P family. Post-translationally, may be beta-lysylated on the epsilon-amino group of Lys-34 by the combined action of EpmA and EpmB, and then hydroxylated on the C5 position of the same residue by EpmC (if this protein is present). Lysylation is critical for the stimulatory effect of EF-P on peptide-bond formation. The lysylation moiety may extend toward the peptidyltransferase center and stabilize the terminal 3-CCA end of the tRNA. Hydroxylation of the C5 position on Lys-34 may allow additional potential stabilizing hydrogen-bond interactions with the P-tRNA.

It is found in the cytoplasm. It functions in the pathway protein biosynthesis; polypeptide chain elongation. Its function is as follows. Involved in peptide bond synthesis. Alleviates ribosome stalling that occurs when 3 or more consecutive Pro residues or the sequence PPG is present in a protein, possibly by augmenting the peptidyl transferase activity of the ribosome. Modification of Lys-34 is required for alleviation. This Vesicomyosocius okutanii subsp. Calyptogena okutanii (strain HA) protein is Elongation factor P.